The sequence spans 286 residues: Putative S-adenosyl-L-methionine-dependent methyltransferase FRAAL3718 (286 aa).

S-adenosyl-L-methionine-binding positions include aspartate 122 and 151–152 (DL).

The protein belongs to the UPF0677 family.

In terms of biological role, exhibits S-adenosyl-L-methionine-dependent methyltransferase activity. The chain is Putative S-adenosyl-L-methionine-dependent methyltransferase FRAAL3718 from Frankia alni (strain DSM 45986 / CECT 9034 / ACN14a).